Consider the following 340-residue polypeptide: Ketol-acid reductoisomerase (NADP(+)) (340 aa).

The KARI N-terminal Rossmann domain occupies 3–182; it reads VQMEYEKDVK…GAARVGLLET (180 aa). NADP(+) is bound by residues 26-29, R49, S53, and 83-86; these read YGSQ and DEIQ. H108 is an active-site residue. G134 serves as a coordination point for NADP(+). Residues 183–328 form the KARI C-terminal knotted domain; it reads TYKEETEEDL…AELRKAMPFV (146 aa). Positions 191, 195, 227, and 231 each coordinate Mg(2+). S252 contributes to the substrate binding site.

Belongs to the ketol-acid reductoisomerase family. It depends on Mg(2+) as a cofactor.

The enzyme catalyses (2R)-2,3-dihydroxy-3-methylbutanoate + NADP(+) = (2S)-2-acetolactate + NADPH + H(+). It catalyses the reaction (2R,3R)-2,3-dihydroxy-3-methylpentanoate + NADP(+) = (S)-2-ethyl-2-hydroxy-3-oxobutanoate + NADPH + H(+). It participates in amino-acid biosynthesis; L-isoleucine biosynthesis; L-isoleucine from 2-oxobutanoate: step 2/4. Its pathway is amino-acid biosynthesis; L-valine biosynthesis; L-valine from pyruvate: step 2/4. Functionally, involved in the biosynthesis of branched-chain amino acids (BCAA). Catalyzes an alkyl-migration followed by a ketol-acid reduction of (S)-2-acetolactate (S2AL) to yield (R)-2,3-dihydroxy-isovalerate. In the isomerase reaction, S2AL is rearranged via a Mg-dependent methyl migration to produce 3-hydroxy-3-methyl-2-ketobutyrate (HMKB). In the reductase reaction, this 2-ketoacid undergoes a metal-dependent reduction by NADPH to yield (R)-2,3-dihydroxy-isovalerate. The chain is Ketol-acid reductoisomerase (NADP(+)) from Streptococcus pneumoniae (strain JJA).